A 118-amino-acid chain; its full sequence is MPRVKGGTVTRKRRKKVLKLAKGYRGAKHLLFKAANAQVMVSYRYAFRDRRAKKRDFRRLWIARINAAARMNDISYSKLMHGLKVANVDMNRKMLADLAVSDPDGFKAVADTAKKALA.

This sequence belongs to the bacterial ribosomal protein bL20 family.

Binds directly to 23S ribosomal RNA and is necessary for the in vitro assembly process of the 50S ribosomal subunit. It is not involved in the protein synthesizing functions of that subunit. The chain is Large ribosomal subunit protein bL20 from Lacticaseibacillus casei (strain BL23) (Lactobacillus casei).